The sequence spans 542 residues: Chaperonin GroEL 2 (542 aa).

ATP is bound by residues 30-33, Lys-51, 87-91, Gly-415, and Asp-496; these read TLGP and DGTTT.

Belongs to the chaperonin (HSP60) family. Forms a cylinder of 14 subunits composed of two heptameric rings stacked back-to-back. Interacts with the co-chaperonin GroES.

It is found in the cytoplasm. The enzyme catalyses ATP + H2O + a folded polypeptide = ADP + phosphate + an unfolded polypeptide.. Functionally, together with its co-chaperonin GroES, plays an essential role in assisting protein folding. The GroEL-GroES system forms a nano-cage that allows encapsulation of the non-native substrate proteins and provides a physical environment optimized to promote and accelerate protein folding. The sequence is that of Chaperonin GroEL 2 from Azorhizobium caulinodans (strain ATCC 43989 / DSM 5975 / JCM 20966 / LMG 6465 / NBRC 14845 / NCIMB 13405 / ORS 571).